The sequence spans 479 residues: Adenylate kinase 8 (479 aa).

Adenylate kinase stretches follow at residues 58 to 258 and 269 to 471; these read PRIV…TYVQ and PRVL…SGII. An ATP-binding site is contributed by 67–72; that stretch reads ASGKTT. The segment at 87–113 is NMP 1; that stretch reads TLENLILNEFSYTATEARRLYLQRKTV. AMP-binding positions include 140-143, glutamine 147, and arginine 203; that span reads GIPE. An LID 1 region spans residues 177-206; the sequence is GKRIDPQTGEIYHTTFDWPPESEIQNRLMV. Position 278 to 283 (278 to 283) interacts with ATP; the sequence is GSGKSL. An NMP 2 region spans residues 298–327; it reads CCGQLLKEAVADRTTFGELIQPFFEKEMAV. Residues 325–327, 354–357, and glutamine 361 each bind AMP; these read MAV and GVPR. An LID 2 region spans residues 391-424; the sequence is LRRIDPVTGERYHLMYKPPPTMEIQARLLQNPKD. An ATP-binding site is contributed by arginine 392.

The protein belongs to the adenylate kinase family. In terms of assembly, interacts with CFAP45 and CFAP52; CFAP45 and AK8 dimerization may create a cavity at the interface of the dimer that can accommodate AMP. As to expression, expressed in respiratory cells (at protein level).

The protein localises to the cytoplasm. It is found in the cytosol. It localises to the cytoskeleton. The protein resides in the cilium axoneme. The catalysed reaction is AMP + ATP = 2 ADP. The enzyme catalyses a 2'-deoxyribonucleoside 5'-diphosphate + ATP = a 2'-deoxyribonucleoside 5'-triphosphate + ADP. It carries out the reaction a ribonucleoside 5'-diphosphate + ATP = a ribonucleoside 5'-triphosphate + ADP. Its function is as follows. Nucleoside monophosphate (NMP) kinase that catalyzes the reversible transfer of the terminal phosphate group between nucleoside triphosphates and monophosphates. Has highest activity toward AMP, and weaker activity toward dAMP, CMP and dCMP. Also displays broad nucleoside diphosphate kinase activity. This is Adenylate kinase 8 (AK8) from Homo sapiens (Human).